The primary structure comprises 523 residues: Lysine--tRNA ligase (523 aa).

The short motif at 30-38 is the 'HIGH' region element; the sequence is PSGYVHVGN. 8 residues coordinate Zn(2+): Asp-95, Cys-99, His-100, His-106, Cys-177, His-180, Cys-199, and His-203. Residues 279–283 carry the 'KMSKS' region motif; sequence KMSGS.

This sequence belongs to the class-I aminoacyl-tRNA synthetase family. Requires Zn(2+) as cofactor.

It is found in the cytoplasm. It carries out the reaction tRNA(Lys) + L-lysine + ATP = L-lysyl-tRNA(Lys) + AMP + diphosphate. The protein is Lysine--tRNA ligase (lysS) of Pyrococcus horikoshii (strain ATCC 700860 / DSM 12428 / JCM 9974 / NBRC 100139 / OT-3).